We begin with the raw amino-acid sequence, 394 residues long: Argininosuccinate synthase (394 aa).

8 to 16 (AYSGGLDTS) is a binding site for ATP. The L-citrulline site is built by Tyr86 and Ser91. Position 116 (Gly116) interacts with ATP. L-aspartate-binding residues include Thr118, Asn122, and Asp123. Asn122 provides a ligand contact to L-citrulline. Residues Arg126, Ser172, Ser181, Glu257, and Tyr269 each contribute to the L-citrulline site.

It belongs to the argininosuccinate synthase family. Type 1 subfamily. As to quaternary structure, homotetramer.

It localises to the cytoplasm. The catalysed reaction is L-citrulline + L-aspartate + ATP = 2-(N(omega)-L-arginino)succinate + AMP + diphosphate + H(+). It participates in amino-acid biosynthesis; L-arginine biosynthesis; L-arginine from L-ornithine and carbamoyl phosphate: step 2/3. The polypeptide is Argininosuccinate synthase (Methanosarcina mazei (strain ATCC BAA-159 / DSM 3647 / Goe1 / Go1 / JCM 11833 / OCM 88) (Methanosarcina frisia)).